Reading from the N-terminus, the 270-residue chain is UPF0354 protein BcerKBAB4_4524 (270 aa).

It belongs to the UPF0354 family.

This Bacillus mycoides (strain KBAB4) (Bacillus weihenstephanensis) protein is UPF0354 protein BcerKBAB4_4524.